A 276-amino-acid polypeptide reads, in one-letter code: Large ribosomal subunit protein uL2 (276 aa).

Disordered regions lie at residues 1 to 20 (MGIK…TTND) and 219 to 276 (TVRG…RRKK). The segment covering 7–20 (NPTTNGRRNMTTND) has biased composition (polar residues).

The protein belongs to the universal ribosomal protein uL2 family. As to quaternary structure, part of the 50S ribosomal subunit. Forms a bridge to the 30S subunit in the 70S ribosome.

Functionally, one of the primary rRNA binding proteins. Required for association of the 30S and 50S subunits to form the 70S ribosome, for tRNA binding and peptide bond formation. It has been suggested to have peptidyltransferase activity; this is somewhat controversial. Makes several contacts with the 16S rRNA in the 70S ribosome. In Bacillus cereus (strain G9842), this protein is Large ribosomal subunit protein uL2.